The following is a 131-amino-acid chain: Steroid Delta-isomerase (131 aa).

Catalysis depends on Tyr16, which acts as the Proton donor. Residue Asp40 is the Proton acceptor of the active site. Asp103 lines the substrate pocket.

As to quaternary structure, homodimer.

It carries out the reaction a 3-oxo-Delta(5)-steroid = a 3-oxo-Delta(4)-steroid. In Pseudomonas putida (Arthrobacter siderocapsulatus), this protein is Steroid Delta-isomerase (ksi).